A 63-amino-acid chain; its full sequence is uncharacterized protein (63 aa).

This is an uncharacterized protein from Thermoproteus tenax virus 1 (strain KRA1) (TTV1).